Consider the following 172-residue polypeptide: Adenine phosphoribosyltransferase (172 aa).

The protein belongs to the purine/pyrimidine phosphoribosyltransferase family. Homodimer.

The protein localises to the cytoplasm. The catalysed reaction is AMP + diphosphate = 5-phospho-alpha-D-ribose 1-diphosphate + adenine. It participates in purine metabolism; AMP biosynthesis via salvage pathway; AMP from adenine: step 1/1. In terms of biological role, catalyzes a salvage reaction resulting in the formation of AMP, that is energically less costly than de novo synthesis. The polypeptide is Adenine phosphoribosyltransferase (Prochlorococcus marinus (strain MIT 9303)).